The chain runs to 310 residues: Small ribosomal subunit protein uS2 (310 aa).

Positions 249–272 are enriched in basic and acidic residues; sequence WERDLLEGEKAEKKDDAEAAEKPA. The disordered stretch occupies residues 249–310; sequence WERDLLEGEK…EAPAADAEQA (62 aa). The segment covering 273 to 310 has biased composition (low complexity); that stretch reads EAPAAEAPAAEAAEAPAAEAAPAEEPAAEAPAADAEQA.

The protein belongs to the universal ribosomal protein uS2 family.

This Streptomyces coelicolor (strain ATCC BAA-471 / A3(2) / M145) protein is Small ribosomal subunit protein uS2 (rpsB).